A 412-amino-acid chain; its full sequence is Transforming growth factor beta-3 proprotein (412 aa).

The signal sequence occupies residues 1 to 23 (MKMHLQRALVVLALLNLATVSLS). Residues Asn74, Asn135, and Asn142 are each glycosylated (N-linked (GlcNAc...) asparagine). Positions 261 to 263 (RGD) match the Cell attachment site motif. The residue at position 293 (Gln293) is an N5-methylglutamine. 4 disulfides stabilise this stretch: Cys307/Cys316, Cys315/Cys378, Cys344/Cys409, and Cys348/Cys411.

The protein belongs to the TGF-beta family. As to quaternary structure, interacts with ASPN. Latency-associated peptide: Homodimer; disulfide-linked. Latency-associated peptide: Interacts with Transforming growth factor beta-3 (TGF-beta-3) chain; interaction is non-covalent and maintains (TGF-beta-3) in a latent state. Latency-associated peptide: Interacts with LRRC32/GARP; leading to regulate activation of TGF-beta-3 and promote epithelial fusion during palate development. Latency-associated peptide: Interacts (via cell attachment site) with integrins, leading to release of the active TGF-beta-3. Transforming growth factor beta-3: Homodimer; disulfide-linked. Transforming growth factor beta-3: Interacts with TGF-beta receptors (TGFBR1 and TGFBR2), leading to signal transduction. Transforming growth factor beta-3 proprotein: The precursor proprotein is cleaved in the Golgi apparatus to form Transforming growth factor beta-3 (TGF-beta-3) and Latency-associated peptide (LAP) chains, which remain non-covalently linked, rendering TGF-beta-3 inactive. Post-translationally, methylated at Gln-293 by N6AMT1. In terms of tissue distribution, expressed in cardiomyocytes.

The protein resides in the secreted. It is found in the extracellular space. The protein localises to the extracellular matrix. Functionally, transforming growth factor beta-3 proprotein: Precursor of the Latency-associated peptide (LAP) and Transforming growth factor beta-3 (TGF-beta-3) chains, which constitute the regulatory and active subunit of TGF-beta-3, respectively. Required to maintain the Transforming growth factor beta-3 (TGF-beta-3) chain in a latent state during storage in extracellular matrix. Associates non-covalently with TGF-beta-3 and regulates its activation via interaction with 'milieu molecules', such as LTBP1 and LRRC32/GARP, that control activation of TGF-beta-3. Interaction with integrins results in distortion of the Latency-associated peptide chain and subsequent release of the active TGF-beta-3. In terms of biological role, transforming growth factor beta-3: Multifunctional protein that regulates embryogenesis and cell differentiation and is required in various processes such as secondary palate development. Activation into mature form follows different steps: following cleavage of the proprotein in the Golgi apparatus, Latency-associated peptide (LAP) and Transforming growth factor beta-3 (TGF-beta-3) chains remain non-covalently linked rendering TGF-beta-3 inactive during storage in extracellular matrix. At the same time, LAP chain interacts with 'milieu molecules', such as LTBP1 and LRRC32/GARP that control activation of TGF-beta-3 and maintain it in a latent state during storage in extracellular milieus. TGF-beta-3 is released from LAP by integrins: integrin-binding results in distortion of the LAP chain and subsequent release of the active TGF-beta-3. Once activated following release of LAP, TGF-beta-3 acts by binding to TGF-beta receptors (TGFBR1 and TGFBR2), which transduce signal. The chain is Transforming growth factor beta-3 proprotein (Tgfb3) from Rattus norvegicus (Rat).